Reading from the N-terminus, the 1014-residue chain is Latrophilin-like protein 1 (1014 aa).

An N-terminal signal peptide occupies residues 1-27 (MRRNKTTYSLLQTILVACLLTVTPTFA). A glycan (N-linked (GlcNAc...) asparagine) is linked at Asn4. At 28–555 (SNKPTTDESG…IDQTLLTLLT (528 aa)) the chain is on the extracellular side. The SUEL-type lectin domain maps to 43 to 134 (ICDGEAAELS…KYLEVKYNCV (92 aa)). The region spanning 359 to 542 (ESNVIVQPAI…AVLMDVRGHD (184 aa)) is the GAIN-B domain. N-linked (GlcNAc...) asparagine glycans are attached at residues Asn473 and Asn518. 2 cysteine pairs are disulfide-bonded: Cys497/Cys524 and Cys512/Cys526. Residues 497-542 (CVWWNHHELKWKPSGCKLSYHNKTMTSCDCTHLTHFAVLMDVRGHD) form a GPS region. A helical transmembrane segment spans residues 556 to 576 (YVGCIISIICLLLTFFAYLIF). Residues 577–584 (SRNGGDRV) are Cytoplasmic-facing. The helical transmembrane segment at 585-605 (FIHENLCLSLAIAEITFLAGI) threads the bilayer. Over 606–613 (TRTEDSLQ) the chain is Extracellular. Residues 614 to 634 (CGIIAVALMYMFLSALTWMLL) traverse the membrane as a helical segment. Topologically, residues 635 to 653 (EGYHIHRMLTEVFPSDPRR) are cytoplasmic. The chain crosses the membrane as a helical span at residues 654 to 674 (FTYLLVGYIPPAIITLVAYLY). The Extracellular segment spans residues 675-692 (NSDGFGTPDHCWLSTQNN). A helical membrane pass occupies residues 693-713 (FIWFFAGPACFIFCANSLVLV). Topologically, residues 714–745 (KTLCTVYQHTSGGYLPCRHDVDSGRSIRNWVK) are cytoplasmic. The helical transmembrane segment at 746-766 (GSLALASLLGVTWIFGLFWVE) threads the bilayer. The Extracellular portion of the chain corresponds to 767–770 (DSRS). A helical membrane pass occupies residues 771-791 (IVMAYVFTISNSLQGLFIFLF). Topologically, residues 792-1014 (HVVFAEKMRK…NKPSMYCQDL (223 aa)) are cytoplasmic. Disordered regions lie at residues 814-833 (GSSN…DLMS) and 932-994 (YQGW…EVTP). The segment covering 941 to 952 (PEFSPPPPPLST) has biased composition (pro residues). The span at 965-986 (SGRRPPSSKMSDDSAYSDGSSS) shows a compositional bias: low complexity.

Belongs to the G-protein coupled receptor 2 family. LN-TM7 subfamily. In terms of assembly, monomer and homodimer. Post-translationally, autoproteolytically processed at the GPS region of the GAIN-B domain; this cleavage modulates receptor activity. In terms of tissue distribution, expressed in epidermal precursor cells and pharyngeal primordium. In adults expression is seen in pharyngeal muscle cells and nervous system, the nerve ring, the gonad, and the vulva.

The protein resides in the cell membrane. Its function is as follows. Has a role in the establishment of anterior-posterior polarity in tissues during embryogenesis. Required for the alignment of the mitotic spindles and division planes. May have a role in cell death events. Required for normal defection and oocyte fertilization. Involved in sperm function. Operates in pharyngeal pumping during feeding. In Caenorhabditis elegans, this protein is Latrophilin-like protein 1.